A 305-amino-acid chain; its full sequence is Tyrosine recombinase XerC (305 aa).

In terms of domain architecture, Core-binding (CB) spans 4-95 (TSIQALINKW…AVKNFYRFLE (92 aa)). A Tyr recombinase domain is found at 116 to 298 (LLPKALSEDD…SIKHLEAVYT (183 aa)). Active-site residues include R159, K182, H250, R253, and H276. The O-(3'-phospho-DNA)-tyrosine intermediate role is filled by Y285.

The protein belongs to the 'phage' integrase family. XerC subfamily. In terms of assembly, forms a cyclic heterotetrameric complex composed of two molecules of XerC and two molecules of XerD.

The protein resides in the cytoplasm. In terms of biological role, site-specific tyrosine recombinase, which acts by catalyzing the cutting and rejoining of the recombining DNA molecules. The XerC-XerD complex is essential to convert dimers of the bacterial chromosome into monomers to permit their segregation at cell division. It also contributes to the segregational stability of plasmids. This Rickettsia africae (strain ESF-5) protein is Tyrosine recombinase XerC.